The primary structure comprises 334 residues: uncharacterized protein (334 aa).

Tyrosine 52 serves as the catalytic Proton donor. Positions 314–334 (LPPPASPNSEPQVTGGCSSMC) are disordered. The span at 320–334 (PNSEPQVTGGCSSMC) shows a compositional bias: polar residues.

Belongs to the aldo/keto reductase family.

It is found in the cytoplasm. Its subcellular location is the nucleus. This is an uncharacterized protein from Schizosaccharomyces pombe (strain 972 / ATCC 24843) (Fission yeast).